We begin with the raw amino-acid sequence, 181 residues long: Resolvase/recombinase (181 aa).

Residues 2–137 (RLFGYARVST…EGRLEAKAKG (136 aa)) enclose the Resolvase/invertase-type recombinase catalytic domain. S10 serves as the catalytic O-(5'-phospho-DNA)-serine intermediate. The H-T-H motif DNA-binding region spans 161–180 (AMEIAKRLKIGRSTVYKVLA).

This sequence belongs to the site-specific recombinase resolvase family.

Site-specific recombination protein. This Pseudomonas putida (Arthrobacter siderocapsulatus) protein is Resolvase/recombinase.